The primary structure comprises 341 residues: UDP-N-acetylenolpyruvoylglucosamine reductase (341 aa).

An FAD-binding PCMH-type domain is found at 15 to 185 (LAQSCADLVE…TAVGLRLVKR (171 aa)). The active site involves Arg-161. The Proton donor role is filled by Ser-231. Glu-327 is an active-site residue.

The protein belongs to the MurB family. FAD serves as cofactor.

It localises to the cytoplasm. The catalysed reaction is UDP-N-acetyl-alpha-D-muramate + NADP(+) = UDP-N-acetyl-3-O-(1-carboxyvinyl)-alpha-D-glucosamine + NADPH + H(+). It participates in cell wall biogenesis; peptidoglycan biosynthesis. In terms of biological role, cell wall formation. In Shewanella baltica (strain OS195), this protein is UDP-N-acetylenolpyruvoylglucosamine reductase.